The sequence spans 344 residues: Centromere protein L (344 aa).

Residues M1–Q32 are disordered. Residues L20 to Q32 are compositionally biased toward polar residues.

The protein belongs to the CENP-L/IML3 family. Component of the CENPA-HI complex, at least composed of CENPH, CENPI, CENPK, CENPL, CENPM, CENPO and CENPP.

The protein localises to the nucleus. It is found in the chromosome. The protein resides in the centromere. Functionally, component of the CENPA-HI complex, a centromeric complex involved in assembly of kinetochore proteins, mitotic progression and chromosome segregation. The protein is Centromere protein L (CENPL) of Gallus gallus (Chicken).